The following is a 527-amino-acid chain: MVTKESIEVIAQSIGLSTLSPDVSAALAPDVEYRVREVMQVYHQLQLYFCPLISSLTCRRNLQEAIKCMRHARRTTLMAHDVDSALHFRNLEPTSGSKSMRFKRAPENRDLYFFDDKDVELKNVIEAPLPNAPPDASVFLHWLAIDGIQPSIPQNSPLQAISDLKRSEYKDDGLAARQVLSKDLQIYFDKVTEWALTQSGSTLFRQALASLEIDPGLHPLVPFFTSFIAEEIVKNMDNYPILLALMRLARSLLHNPHVHIEPYLHQLMPSIITCLIAKRLGRRSSDNHWDLRNFTASTVASTCKRFGHVYHNLLPRVTRSLLHTFLDPTKALPQHYGAIQGMVALGLNMVRFLVLPNLGPYLLLLLPEMGLEKQKEEAKRHGAWLVYGALMVAAGRCLYERLKTSETLLSPPTSSVWKTNGKLTSPRQSKRKASSDNLTHQPPLKKIAVGGIIQMSSTQMQMRGTTTVPQQSHTDADARHHNSPSTIAPKTSAAAGTDVDNYLFPLFEYFGESMLMFTPTHELSFFL.

One can recognise a Histone-fold domain in the interval 3–99; sequence TKESIEVIAQ…NLEPTSGSKS (97 aa). Disordered stretches follow at residues 410-442 and 462-492; these read SPPT…THQP and MRGT…PKTS. Composition is skewed to polar residues over residues 416–427 and 462–473; these read VWKTNGKLTSPR and MRGTTTVPQQSH.

Belongs to the TAF6 family. In terms of assembly, component of the TFIID complex. TFIID is composed of TATA binding protein (TBP) and a number of TBP-associated factors (TAFs) whose MWs range from 14-217 kDa. Interacts with TAF5 and TAF9. In terms of tissue distribution, expressed in roots, leaves, inflorescences and siliques.

It localises to the nucleus. Its function is as follows. TAFs are components of the transcription factor IID (TFIID) complex that is essential for mediating regulation of RNA polymerase transcription. Not redundant with TAF6. The protein is Transcription initiation factor TFIID subunit 6b (TAF6B) of Arabidopsis thaliana (Mouse-ear cress).